A 694-amino-acid chain; its full sequence is Elongation factor G (694 aa).

The 276-residue stretch at 10–285 (EKTRNIGIMA…GVVDYLPSPL (276 aa)) folds into the tr-type G domain. GTP is bound by residues 19-26 (AHIDAGKT), 83-87 (DTPGH), and 137-140 (NKMD).

Belongs to the TRAFAC class translation factor GTPase superfamily. Classic translation factor GTPase family. EF-G/EF-2 subfamily.

It is found in the cytoplasm. Functionally, catalyzes the GTP-dependent ribosomal translocation step during translation elongation. During this step, the ribosome changes from the pre-translocational (PRE) to the post-translocational (POST) state as the newly formed A-site-bound peptidyl-tRNA and P-site-bound deacylated tRNA move to the P and E sites, respectively. Catalyzes the coordinated movement of the two tRNA molecules, the mRNA and conformational changes in the ribosome. The sequence is that of Elongation factor G from Lactobacillus delbrueckii subsp. bulgaricus (strain ATCC 11842 / DSM 20081 / BCRC 10696 / JCM 1002 / NBRC 13953 / NCIMB 11778 / NCTC 12712 / WDCM 00102 / Lb 14).